A 405-amino-acid chain; its full sequence is Tryptophan synthase beta chain (405 aa).

At lysine 98 the chain carries N6-(pyridoxal phosphate)lysine.

It belongs to the TrpB family. In terms of assembly, tetramer of two alpha and two beta chains. Pyridoxal 5'-phosphate is required as a cofactor.

It carries out the reaction (1S,2R)-1-C-(indol-3-yl)glycerol 3-phosphate + L-serine = D-glyceraldehyde 3-phosphate + L-tryptophan + H2O. The protein operates within amino-acid biosynthesis; L-tryptophan biosynthesis; L-tryptophan from chorismate: step 5/5. Functionally, the beta subunit is responsible for the synthesis of L-tryptophan from indole and L-serine. This is Tryptophan synthase beta chain from Stenotrophomonas maltophilia (strain K279a).